The sequence spans 613 residues: Glutamyl-tRNA(Gln) amidotransferase subunit E (613 aa).

It belongs to the GatB/GatE family. GatE subfamily. Heterodimer of GatD and GatE.

It carries out the reaction L-glutamyl-tRNA(Gln) + L-glutamine + ATP + H2O = L-glutaminyl-tRNA(Gln) + L-glutamate + ADP + phosphate + H(+). Functionally, allows the formation of correctly charged Gln-tRNA(Gln) through the transamidation of misacylated Glu-tRNA(Gln) in organisms which lack glutaminyl-tRNA synthetase. The reaction takes place in the presence of glutamine and ATP through an activated gamma-phospho-Glu-tRNA(Gln). The GatDE system is specific for glutamate and does not act on aspartate. This is Glutamyl-tRNA(Gln) amidotransferase subunit E from Archaeoglobus fulgidus (strain ATCC 49558 / DSM 4304 / JCM 9628 / NBRC 100126 / VC-16).